A 220-amino-acid polypeptide reads, in one-letter code: dITP/XTP pyrophosphatase (220 aa).

13–18 is a binding site for substrate; sequence SHNAGK. Mg(2+) contacts are provided by D45 and D74. D74 acts as the Proton acceptor in catalysis. Substrate contacts are provided by residues S75, 163–166, K186, and 199–200; these read FGYD and HR.

It belongs to the HAM1 NTPase family. Homodimer. Mg(2+) serves as cofactor.

The enzyme catalyses XTP + H2O = XMP + diphosphate + H(+). It carries out the reaction dITP + H2O = dIMP + diphosphate + H(+). It catalyses the reaction ITP + H2O = IMP + diphosphate + H(+). Its function is as follows. Pyrophosphatase that catalyzes the hydrolysis of nucleoside triphosphates to their monophosphate derivatives, with a high preference for the non-canonical purine nucleotides XTP (xanthosine triphosphate), dITP (deoxyinosine triphosphate) and ITP. Seems to function as a house-cleaning enzyme that removes non-canonical purine nucleotides from the nucleotide pool, thus preventing their incorporation into DNA/RNA and avoiding chromosomal lesions. The sequence is that of dITP/XTP pyrophosphatase from Mesorhizobium japonicum (strain LMG 29417 / CECT 9101 / MAFF 303099) (Mesorhizobium loti (strain MAFF 303099)).